We begin with the raw amino-acid sequence, 247 residues long: Small ribosomal subunit protein uS2 (247 aa).

It belongs to the universal ribosomal protein uS2 family.

The protein is Small ribosomal subunit protein uS2 of Halorhodospira halophila (strain DSM 244 / SL1) (Ectothiorhodospira halophila (strain DSM 244 / SL1)).